Consider the following 357-residue polypeptide: MTELNFHLLPIISDRFTTTTTTSPSFSSHSSSSSSLLSFTKRRRKHQPLVSSIRMEQSRSRNRKDKVVVILGATGAGKSRLSVDLATRFPSEIINSDKIQVYEGLEITTNQITLQDRRGVPHHLLGVINPEHGELTAGEFRSAASNVVKEITSRQKVPIIAGGSNSFVHALLAQRFDPKFDPFSSGSCLISSDLRYECCFIWVDVSETVLYEYLLRRVDEMMDSGMFEELSRFYDPVKSGLETRFGIRKAIGVPEFDGYFKEYPPEKKMIKWDALRKAAYDKAVDDIKRNTWTLAKRQVKKIEMLKDAGWEIERVDATASFKAVMMKSSSEKKWRENWEEQVLEPSVKIVKRHLVQN.

The transit peptide at 1–71 directs the protein to the chloroplast; the sequence is MTELNFHLLP…NRKDKVVVIL (71 aa). The segment covering 20 to 39 has biased composition (low complexity); it reads TTTSPSFSSHSSSSSSLLSF. Residues 20 to 58 are disordered; it reads TTTSPSFSSHSSSSSSLLSFTKRRRKHQPLVSSIRMEQS. 72–79 is a binding site for ATP; it reads GATGAGKS.

This sequence belongs to the IPP transferase family. In terms of tissue distribution, expressed in the vascular stele of the roots, in the xylem precursor cell files in the root tip, in leaf axils, ovules, and immature seeds.

The protein resides in the plastid. It is found in the chloroplast. It catalyses the reaction dimethylallyl diphosphate + AMP = N(6)-(dimethylallyl)adenosine 5'-phosphate + diphosphate. The catalysed reaction is dimethylallyl diphosphate + ADP = N(6)-(dimethylallyl)adenosine 5'-diphosphate + diphosphate. The enzyme catalyses dimethylallyl diphosphate + ATP = N(6)-(dimethylallyl)adenosine 5'-triphosphate + diphosphate. Its function is as follows. Involved in cytokinin biosynthesis. Catalyzes the transfer of an isopentenyl group from dimethylallyl diphosphate (DMAPP) to ATP, ADP and AMP. Adenine, adenosine, isopentenylpyrophosphate and 1-hydroxy-2-methyl-2-(E)-butenyl 4-diphosphate (HMBDP) are not used as substrates. The chain is Adenylate isopentenyltransferase 1, chloroplastic (IPT1) from Arabidopsis thaliana (Mouse-ear cress).